The sequence spans 730 residues: UvrABC system protein C (730 aa).

Residues 16 to 95 (AAPGVYKFRD…IKEFDPRFNV (80 aa)) enclose the GIY-YIG domain. Positions 208-243 (DKLVKDLEKRMQQASEDLDFETAARLRDDIGALRKA) constitute a UVR domain. Residues 678–730 (ARALPAAVGDDELDKESESSVTSADAPSAESGSGDEGSESRELSMPTTGPSAQ) are disordered.

Belongs to the UvrC family. Interacts with UvrB in an incision complex.

It localises to the cytoplasm. In terms of biological role, the UvrABC repair system catalyzes the recognition and processing of DNA lesions. UvrC both incises the 5' and 3' sides of the lesion. The N-terminal half is responsible for the 3' incision and the C-terminal half is responsible for the 5' incision. This chain is UvrABC system protein C, found in Rhodococcus erythropolis (strain PR4 / NBRC 100887).